Here is a 320-residue protein sequence, read N- to C-terminus: MRSAQVYRWQIPMDAGVVLRDRRLKTRDGLYVCLRDGEREGWGEISPLPGFSQETWEEAQTALLTWVNDWLQGSEGLPEMPSVAFGASCALAELTGVLPEAADYRAAPLCTGDPDDLVLRLADMPGEKIAKVKVGLYEAVRDGMVVNVLLEAIPDLHLRLDANRAWTPLKAQQFAKYVNPDYRARIAFLEEPCKTRDDSRAFARETGIAIAWDESLREADFTFEAEEGVRAVVIKPTLTGSLDKVREQVAAAHALGLTAVISSSIESSLGLTQLARIAAWLTPGTLPGLDTLHLMQAQQIRPWPGSALPCLKREELERLL.

Lys133 serves as the catalytic Proton donor. Positions 161, 190, and 213 each coordinate Mg(2+). Catalysis depends on Lys235, which acts as the Proton acceptor.

The protein belongs to the mandelate racemase/muconate lactonizing enzyme family. MenC type 1 subfamily. A divalent metal cation serves as cofactor.

The catalysed reaction is (1R,6R)-6-hydroxy-2-succinyl-cyclohexa-2,4-diene-1-carboxylate = 2-succinylbenzoate + H2O. It functions in the pathway quinol/quinone metabolism; 1,4-dihydroxy-2-naphthoate biosynthesis; 1,4-dihydroxy-2-naphthoate from chorismate: step 4/7. Its pathway is quinol/quinone metabolism; menaquinone biosynthesis. Its function is as follows. Converts 2-succinyl-6-hydroxy-2,4-cyclohexadiene-1-carboxylate (SHCHC) to 2-succinylbenzoate (OSB). In Salmonella heidelberg (strain SL476), this protein is o-succinylbenzoate synthase.